Here is a 581-residue protein sequence, read N- to C-terminus: Tetratricopeptide repeat and J domain-containing co-chaperone DNJ1 (581 aa).

The signal sequence occupies residues 1–19 (MKATLLPSLLALSLTLCLA). TPR repeat units lie at residues 48 to 81 (ASQH…DPSS), 82 to 115 (WLTY…NPKF), 116 to 149 (DKAY…RAEK), 221 to 254 (LETR…TPSP), 257 to 293 (LRRL…DPDN), 378 to 411 (LELH…DPDN), and 412 to 445 (VEAT…SGRT). N293 carries N-linked (GlcNAc...) asparagine glycosylation. In terms of domain architecture, J spans 467–528 (DYYKVLGVKR…ELRKKYDQGD (62 aa)). The tract at residues 522-544 (KKYDQGDDPNDPMGGQQGGYGNP) is disordered.

Interacts with the ER chaperone BIP1.

Its subcellular location is the endoplasmic reticulum lumen. Functionally, endoplasmic reticulum (ER) protein that functions as a co-chaperone for BIP1 during ER stress. Might be specifically involved in the refolding of N-glycosylated proteins. The protein is Tetratricopeptide repeat and J domain-containing co-chaperone DNJ1 of Mycosarcoma maydis (Corn smut fungus).